The following is a 60-amino-acid chain: Large ribosomal subunit protein bL32 (60 aa).

Belongs to the bacterial ribosomal protein bL32 family.

In Clostridium acetobutylicum (strain ATCC 824 / DSM 792 / JCM 1419 / IAM 19013 / LMG 5710 / NBRC 13948 / NRRL B-527 / VKM B-1787 / 2291 / W), this protein is Large ribosomal subunit protein bL32.